A 95-amino-acid polypeptide reads, in one-letter code: Small ribosomal subunit protein bS18 (95 aa).

It belongs to the bacterial ribosomal protein bS18 family. Part of the 30S ribosomal subunit. Forms a tight heterodimer with protein bS6.

Functionally, binds as a heterodimer with protein bS6 to the central domain of the 16S rRNA, where it helps stabilize the platform of the 30S subunit. In Ehrlichia canis (strain Jake), this protein is Small ribosomal subunit protein bS18.